Here is a 191-residue protein sequence, read N- to C-terminus: MEAQVFLASGSPRRKELLTQLGYQFDVLSVDVEEIHQEHETPLMYVERLSKDKAQAGVKAIEKTKNKYTPVLGSDTIVVIDGVILEKPKDFKDAKRMLLALSGRQHQVMTAVTIATPEKIRTKTVITQVWFKTLSEQEIEQYWESGEPCDKAGSYGIQGSGGRFVSRIDGSYHAVMGLPLMETDQLLHQFL.

D75 acts as the Proton acceptor in catalysis.

Belongs to the Maf family. YhdE subfamily. Requires a divalent metal cation as cofactor.

Its subcellular location is the cytoplasm. The catalysed reaction is dTTP + H2O = dTMP + diphosphate + H(+). The enzyme catalyses UTP + H2O = UMP + diphosphate + H(+). Functionally, nucleoside triphosphate pyrophosphatase that hydrolyzes dTTP and UTP. May have a dual role in cell division arrest and in preventing the incorporation of modified nucleotides into cellular nucleic acids. The polypeptide is dTTP/UTP pyrophosphatase (Aliivibrio fischeri (strain ATCC 700601 / ES114) (Vibrio fischeri)).